Consider the following 227-residue polypeptide: Transmembrane emp24 domain-containing protein 1 (227 aa).

The N-terminal stretch at 1-23 is a signal peptide; the sequence is MMAAGTALGLALWLLLPPVGVGG. Residues 24 to 194 lie on the Extracellular side of the membrane; it reads AGPPPIQDGE…LQEGNLERVN (171 aa). The 83-residue stretch at 43–125 folds into the GOLD domain; it reads KQCFYQSAPA…EKLVFFELIF (83 aa). Residues 145 to 170 adopt a coiled-coil conformation; it reads EILEVKMEDIKESIETMRIRLERSIQ. A helical transmembrane segment spans residues 195–215; that stretch reads FWSAVNVAVLLLVAVLQVCTL. Topologically, residues 216-227 are cytoplasmic; it reads KRFFQDKRPVPM. Residues 218–219 carry the COPII vesicle coat-binding motif; the sequence is FF. Residues 218 to 227 carry the COPI vesicle coat-binding motif; that stretch reads FFQDKRPVPM.

The protein belongs to the EMP24/GP25L family. In terms of assembly, homodimer in endoplasmic reticulum, endoplasmic reticulum-Golgi intermediate compartment and cis-Golgi network. Interacts with IL1RL1. Interacts with RNF26; this interaction is important to modulate innate immune signaling through the cGAS-STING pathway.

Its subcellular location is the cell membrane. It is found in the endoplasmic reticulum membrane. The protein localises to the golgi apparatus. It localises to the cis-Golgi network membrane. The protein resides in the endoplasmic reticulum-Golgi intermediate compartment membrane. Potential role in vesicular protein trafficking, mainly in the early secretory pathway. May act as a cargo receptor at the lumenal side for incorporation of secretory cargo molecules into transport vesicles and may be involved in vesicle coat formation at the cytoplasmic side. Plays a positive role in IL-33-mediated IL-8 and IL-6 production by interacting with interleukin-33 receptor IL1RL1. Plays also a role in the modulation of innate immune signaling through the cGAS-STING pathway by interacting with RNF26. This is Transmembrane emp24 domain-containing protein 1 (TMED1) from Bos taurus (Bovine).